The sequence spans 595 residues: Peptidyl-prolyl cis-trans isomerase CYP65 (595 aa).

In terms of domain architecture, U-box spans 35-108 (KSLPYYCCAL…GEYHCPVLNK (74 aa)). One can recognise a PPIase cyclophilin-type domain in the interval 342–496 (KKGYVQFQTT…EEIKIIEASV (155 aa)). Disordered stretches follow at residues 503 to 546 (ELDE…GGGG) and 576 to 595 (SKKR…FSSW). Residues 510 to 525 (KEKAEKEKNEDKDIEK) are compositionally biased toward basic and acidic residues. Over residues 582–595 (TASASTGFKDFSSW) the composition is skewed to polar residues.

It belongs to the cyclophilin-type PPIase family. PPIL2 subfamily. In terms of tissue distribution, expressed in leaves, flower buds and stems. Lower levels of expression in roots.

It localises to the nucleus. It catalyses the reaction [protein]-peptidylproline (omega=180) = [protein]-peptidylproline (omega=0). The catalysed reaction is S-ubiquitinyl-[E2 ubiquitin-conjugating enzyme]-L-cysteine + [acceptor protein]-L-lysine = [E2 ubiquitin-conjugating enzyme]-L-cysteine + N(6)-ubiquitinyl-[acceptor protein]-L-lysine.. Its pathway is protein modification; protein ubiquitination. Functionally, may catalyze the cis-trans isomerization of proline imidic peptide bonds in oligopeptides thereby assisting the folding of proteins. May also function as a chaperone, playing a role in intracellular transport of proteins. May also have a protein ubiquitin ligase activity acting as an E3 ubiquitin protein ligase or as a ubiquitin-ubiquitin ligase promoting elongation of ubiquitin chains on proteins. In Arabidopsis thaliana (Mouse-ear cress), this protein is Peptidyl-prolyl cis-trans isomerase CYP65 (CYP65).